Reading from the N-terminus, the 189-residue chain is Fucolectin-5 (189 aa).

The first 31 residues, 1 to 31 (MKTCNLTDRMKVKMIMLLFQILAISTLQSDS), serve as a signal peptide directing secretion. The F5/8 type C-like stretch occupies residues 40–189 (QENVAVRGKA…VEVNALLPAN (150 aa)). Ca(2+) contacts are provided by Asp-70, Asn-72, and Ser-81. Intrachain disulfides connect Cys-82-Cys-178, Cys-114-Cys-115, and Cys-140-Cys-156. Residues His-84 and Arg-111 each contribute to the alpha-L-fucose site. Residues 111-113 (RGD) carry the Cell attachment site motif. Arg-118 serves as a coordination point for alpha-L-fucose. Positions 178 and 179 each coordinate Ca(2+).

The protein belongs to the fucolectin family. Homotrimer. Gill mucous cells.

Its subcellular location is the secreted. Its function is as follows. Acts as a defensive agent. Recognizes blood group fucosylated oligosaccharides including A, B, H and Lewis B-type antigens. Does not recognize Lewis A antigen and has low affinity for monovalent haptens. This chain is Fucolectin-5, found in Anguilla japonica (Japanese eel).